The primary structure comprises 375 residues: Filamin-binding LIM protein 1 (375 aa).

The filamin-binding stretch occupies residues 1-70; that stretch reads MASKPEKRVA…SPWTPPGRAA (70 aa). Disordered stretches follow at residues 43-119 and 137-176; these read WEAP…PSEE and HLSP…AERV. Pro residues-rich tracts occupy residues 104 to 114 and 140 to 149; these read FPPPPPPPPVL and PPLPPPPPQA. A compositionally biased stretch (low complexity) spans 150–159; it reads PAERPSVQPS. LIM zinc-binding domains lie at 183–244, 245–302, and 303–372; these read DICA…TLER, CGKC…RKFA, and PVCS…RSAA. Residues 278–375 are FERMT2-binding; that stretch reads IGDESFALGS…HVKRSAAGCC (98 aa).

Interacts with FERMT2, FLNA, FLNB and FLNC. Interacts with NKX2-5.

It is found in the cell junction. Its subcellular location is the focal adhesion. It localises to the cytoplasm. The protein localises to the cytoskeleton. The protein resides in the stress fiber. Functionally, serves as an anchoring site for cell-ECM adhesion proteins and filamin-containing actin filaments. Is implicated in cell shape modulation (spreading) and motility. May participate in the regulation of filamin-mediated cross-linking and stabilization of actin filaments. May also regulate the assembly of filamin-containing signaling complexes that control actin assembly. Promotes dissociation of FLNA from ITGB3 and ITGB7. Promotes activation of integrins and regulates integrin-mediated cell-cell adhesion. The protein is Filamin-binding LIM protein 1 (FBLIM1) of Pongo abelii (Sumatran orangutan).